Reading from the N-terminus, the 415-residue chain is Vascular endothelial growth factor C (415 aa).

Residues 1 to 31 (MHLLCFLSLACSLLAAALIPGPREAPATVAA) form the signal peptide. Residues 32-107 (FESGLGFSEA…RTGDTVKLAA (76 aa)) constitute a propeptide that is removed on maturation. Cystine bridges form between C127–C169, C158–C205, and C162–C207. Residues N171, N201, and N236 are each glycosylated (N-linked (GlcNAc...) asparagine). Residues 224–415 (SLPATLPQCQ…PSYWKRPHLN (192 aa)) constitute a propeptide that is removed on maturation. 4 repeat units span residues 276–291 (CGPN…QCVC), 300–315 (CGPH…QCVC), 324–339 (CGAN…QCVC), and 343–358 (CPRN…ACEC). The 4 X 16 AA repeats of C-X(10)-C-X-C-X(1,3)-C stretch occupies residues 276 to 358 (CGPNKELDED…LNPGKCACEC (83 aa)).

It belongs to the PDGF/VEGF growth factor family. In terms of assembly, homodimer; non-covalent and antiparallel. Interacts with FLT4/VEGFR3; the interaction is required for FLT4/VEGFR3 homodimarization and activation. Undergoes a complex proteolytic maturation which generates a variety of processed secreted forms with increased activity toward VEGFR-3, but only the fully processed form could activate VEGFR-2. VEGF-C first form an antiparallel homodimer linked by disulfide bonds. Before secretion, a cleavage occurs between Arg-223 and Ser-224 producing a heterotetramer. The next extracellular step of the processing removes the N-terminal propeptide. Finally the mature VEGF-C is composed mostly of two VEGF homology domains (VHDs) bound by non-covalent interactions. As to expression, highly expressed in the lung, ovary, preputial gland and the adrenal gland. Expressed in the post-pubertal mammary glands.

It is found in the secreted. Growth factor active in angiogenesis, and endothelial cell growth, stimulating their proliferation and migration and also has effects on the permeability of blood vessels. May function in angiogenesis of the venous and lymphatic vascular systems during embryogenesis, and also in the maintenance of differentiated lymphatic endothelium in adults. Binds and activates KDR/VEGFR2 and FLT4/VEGFR3 receptors. This chain is Vascular endothelial growth factor C (Vegfc), found in Rattus norvegicus (Rat).